Consider the following 255-residue polypeptide: BPI fold-containing family A member 1 (255 aa).

A signal peptide spans 1–19 (MFHIGSLVVLCGLLAPTTA). Residues 87–92 (LLGSLL) form an important for surfactant activity and antibacterial properties region. N-linked (GlcNAc...) asparagine glycans are attached at residues N157, N178, and N205. A disulfide bond links C179 and C223.

This sequence belongs to the BPI/LBP/Plunc superfamily. Plunc family. In terms of assembly, monomer. Interacts (via N-terminus) with SCNN1B, a subunit of the heterotrimeric epithelial sodium channel (ENaC); this inhibits proteolytic activation of ENaC. In terms of tissue distribution, expressed in trachea, and at lower levels in nasal epithelium.

The protein resides in the secreted. Functionally, lipid-binding protein which shows high specificity for the surfactant phospholipid dipalmitoylphosphatidylcholine (DPPC). Plays a role in the innate immune responses of the upper airways. Reduces the surface tension in secretions from airway epithelia and inhibits the formation of biofilm by pathogenic Gram-negative bacteria, such as P.aeruginosa and K.pneumoniae. Negatively regulates proteolytic cleavage of SCNN1G, an event that is required for activation of the epithelial sodium channel (ENaC), and thereby contributes to airway surface liquid homeostasis and proper clearance of mucus. Plays a role in the airway inflammatory response after exposure to irritants. May attract macrophages and neutrophils. This Bos taurus (Bovine) protein is BPI fold-containing family A member 1 (BPIFA1).